Reading from the N-terminus, the 1039-residue chain is Antigen 43 (1039 aa).

Positions 1–52 (MKRHLNTCYRLVWNHMTGAFVVASELARARGKRGGVAVALSLAAVTSLPVLA) are cleaved as a signal peptide. In terms of domain architecture, Autotransporter spans 737-1039 (VNGENNSVRL…NGQATLNVTF (303 aa)).

In terms of assembly, interaction with TamA of the translocation and assembly module (TAM) initiates insertion in the outer membrane.

The protein resides in the periplasm. The protein localises to the secreted. Its subcellular location is the cell surface. It localises to the cell outer membrane. In terms of biological role, controls colony form variation and autoaggregation. May function as an adhesin. This is Antigen 43 (flu) from Escherichia coli (strain K12).